We begin with the raw amino-acid sequence, 152 residues long: Ribosome maturation factor RimP (152 aa).

Belongs to the RimP family.

Its subcellular location is the cytoplasm. In terms of biological role, required for maturation of 30S ribosomal subunits. This Salmonella arizonae (strain ATCC BAA-731 / CDC346-86 / RSK2980) protein is Ribosome maturation factor RimP.